The primary structure comprises 366 residues: Carbamoyl phosphate synthase small chain (366 aa).

The segment at 1–168 (MYGILVLEDG…KETVIYNAED (168 aa)) is CPSase. Residues Ser45, Gly220, and Gly222 each coordinate L-glutamine. The 192-residue stretch at 172–363 (RCVLIDCGVK…VELGIKFKAE (192 aa)) folds into the Glutamine amidotransferase type-1 domain. The active-site Nucleophile is the Cys247. L-glutamine contacts are provided by Leu248, Gln251, Asn289, Gly291, and Phe292. Active-site residues include His336 and Glu338.

This sequence belongs to the CarA family. Composed of two chains; the small (or glutamine) chain promotes the hydrolysis of glutamine to ammonia, which is used by the large (or ammonia) chain to synthesize carbamoyl phosphate. Tetramer of heterodimers (alpha,beta)4.

The enzyme catalyses hydrogencarbonate + L-glutamine + 2 ATP + H2O = carbamoyl phosphate + L-glutamate + 2 ADP + phosphate + 2 H(+). It catalyses the reaction L-glutamine + H2O = L-glutamate + NH4(+). Its pathway is amino-acid biosynthesis; L-arginine biosynthesis; carbamoyl phosphate from bicarbonate: step 1/1. It functions in the pathway pyrimidine metabolism; UMP biosynthesis via de novo pathway; (S)-dihydroorotate from bicarbonate: step 1/3. Small subunit of the glutamine-dependent carbamoyl phosphate synthetase (CPSase). CPSase catalyzes the formation of carbamoyl phosphate from the ammonia moiety of glutamine, carbonate, and phosphate donated by ATP, constituting the first step of 2 biosynthetic pathways, one leading to arginine and/or urea and the other to pyrimidine nucleotides. The small subunit (glutamine amidotransferase) binds and cleaves glutamine to supply the large subunit with the substrate ammonia. The protein is Carbamoyl phosphate synthase small chain of Methanococcus maripaludis (strain C5 / ATCC BAA-1333).